The sequence spans 264 residues: Proteasome assembly chaperone 2 (264 aa).

Thr137 bears the Phosphothreonine mark.

The protein belongs to the PSMG2 family. Forms a heterodimer with PSMG1. The PSMG1-PSMG2 heterodimer interacts directly with the PSMA5 and PSMA7 proteasome alpha subunits. Degraded by the proteasome upon completion of 20S proteasome maturation.

It localises to the nucleus. Chaperone protein which promotes assembly of the 20S proteasome as part of a heterodimer with PSMG1. The PSMG1-PSMG2 heterodimer binds to the PSMA5 and PSMA7 proteasome subunits, promotes assembly of the proteasome alpha subunits into the heteroheptameric alpha ring and prevents alpha ring dimerization. The polypeptide is Proteasome assembly chaperone 2 (Mus musculus (Mouse)).